The following is a 63-amino-acid chain: Metallothionein-like protein type 3 (63 aa).

The protein belongs to the metallothionein superfamily. Type 15 family.

Functionally, metallothioneins have a high content of cysteine residues that bind various heavy metals. In Actinidia deliciosa (Kiwi), this protein is Metallothionein-like protein type 3.